Here is an 883-residue protein sequence, read N- to C-terminus: Alanine--tRNA ligase (883 aa).

Zn(2+)-binding residues include H563, H567, C677, and H681.

It belongs to the class-II aminoacyl-tRNA synthetase family. The cofactor is Zn(2+).

It is found in the cytoplasm. It catalyses the reaction tRNA(Ala) + L-alanine + ATP = L-alanyl-tRNA(Ala) + AMP + diphosphate. Functionally, catalyzes the attachment of alanine to tRNA(Ala) in a two-step reaction: alanine is first activated by ATP to form Ala-AMP and then transferred to the acceptor end of tRNA(Ala). Also edits incorrectly charged Ser-tRNA(Ala) and Gly-tRNA(Ala) via its editing domain. This Cereibacter sphaeroides (strain ATCC 17029 / ATH 2.4.9) (Rhodobacter sphaeroides) protein is Alanine--tRNA ligase.